A 485-amino-acid chain; its full sequence is Probable glycine dehydrogenase (decarboxylating) subunit 2 (485 aa).

Position 273 is an N6-(pyridoxal phosphate)lysine (lysine 273).

It belongs to the GcvP family. C-terminal subunit subfamily. In terms of assembly, the glycine cleavage system is composed of four proteins: P, T, L and H. In this organism, the P 'protein' is a heterodimer of two subunits. The cofactor is pyridoxal 5'-phosphate.

It catalyses the reaction N(6)-[(R)-lipoyl]-L-lysyl-[glycine-cleavage complex H protein] + glycine + H(+) = N(6)-[(R)-S(8)-aminomethyldihydrolipoyl]-L-lysyl-[glycine-cleavage complex H protein] + CO2. The glycine cleavage system catalyzes the degradation of glycine. The P protein binds the alpha-amino group of glycine through its pyridoxal phosphate cofactor; CO(2) is released and the remaining methylamine moiety is then transferred to the lipoamide cofactor of the H protein. In Oceanobacillus iheyensis (strain DSM 14371 / CIP 107618 / JCM 11309 / KCTC 3954 / HTE831), this protein is Probable glycine dehydrogenase (decarboxylating) subunit 2.